The primary structure comprises 133 residues: Profilin (133 aa).

This sequence belongs to the profilin family. Occurs in many kinds of cells as a complex with monomeric actin in a 1:1 ratio.

The protein localises to the cytoplasm. The protein resides in the cytoskeleton. In terms of biological role, binds to actin and affects the structure of the cytoskeleton. At high concentrations, profilin prevents the polymerization of actin, whereas it enhances it at low concentrations. By binding to PIP2, it inhibits the formation of IP3 and DG. This chain is Profilin, found in Mercurialis annua (Annual mercury).